A 775-amino-acid polypeptide reads, in one-letter code: Ankyrin repeat and EF-hand domain-containing protein 1 (775 aa).

ANK repeat units lie at residues 47-76 (DGLSALHLASISNDTDMVSFLLKLGAHPDV), 184-213 (TGRTALMESSREGVLEIVRGILERGGEVNA), 217-246 (DRHHAAHFAAKGGFFDILKLLFAYNGDMGL), 250-279 (DGNTPLHFAAMGGFADCCKYIAQRGCDLKW), 524-553 (TYKTPLMIACASGNIDVVKFLIEKGANVNA), 557-586 (FLWTPLHFACHAGQQDIVELLVKAGASIDA), 590-619 (NNSTPLSRAIESCRLDTVKYLLDMGAKFQI), and 623-652 (KGHAAMDIAKAYADYRIIDMIKEKLDNLPK).

The sequence is that of Ankyrin repeat and EF-hand domain-containing protein 1 (Ankef1) from Mus musculus (Mouse).